The primary structure comprises 577 residues: Insulin-like growth factor 2 mRNA-binding protein 1 (577 aa).

RRM domains lie at N2–P75 and R81–D156. S12 and S73 each carry phosphoserine. The disordered stretch occupies residues A160–K190. At S181 the chain carries Phosphoserine. KH domains lie at D195 to I260, E276 to I343, Q405 to I470, and K487 to I553. The segment at I310 to E324 is sufficient for nuclear export. The segment at E485 to P495 is sufficient for nuclear export. At T528 the chain carries Phosphothreonine.

Belongs to the RRM IMP/VICKZ family. As to quaternary structure, can form homodimers and heterodimers with IGF2BP1 and IGF2BP3. Component of the coding region determinant (CRD)-mediated complex, composed of DHX9, HNRNPU, IGF2BP1, SYNCRIP and YBX1. During HCV infection, identified in a HCV IRES-mediated translation complex, at least composed of EIF3C, IGF2BP1, RPS3 and HCV RNA-replicon. Interacts (via the KH domains) with HIV-1 GAG (via the second zinc finger motif of NC). Associates (via the RRM domains and KH domains) with HIV-1 particles. Identified in a mRNP complex, composed of at least DHX9, DDX3X, ELAVL1, HNRNPU, IGF2BP1, ILF3, PABPC1, PCBP2, PTBP2, STAU1, STAU2, SYNCRIP and YBX1. Identified in a IGF2BP1-dependent mRNP granule complex containing untranslated mRNAs. Interacts with DHX9, ELAVL2, HNRNPA2B1, HNRNPC, HNRNPH1, HNRNPU, IGF2BP2, ILF2, and YBX1. Interacts with FMR1. Component of a multisubunit autoregulatory RNP complex (ARC), at least composed of IGF2BP1, PABPC1 and CSDE1/UNR. Directly interacts with PABPC1. Component of a TAU mRNP complex, at least composed of IGF2BP1, ELAVL4 and G3BP. Interacts with ELAVL4 in an RNA-dependent manner. Associates with microtubules and polysomes. Interacts with AGO1 and AGO2. Interacts with ELAVL1 and MATR3. Interacts (via KH3 and KH4 domains) with SEPIN14P20 peptide RBRP; the interaction results in increased binding of IGF2BP1 to N6-methyladenosine (m6A)-containing mRNAs. In terms of processing, phosphorylated at Ser-181 by mTORC2 cotranslationally, promoting binding to the 3'-UTR of IGF2 mRNA. As to expression, mainly expressed in the embryo, including in fetal liver, fetal lung, fetal kidney, fetal thymus (at protein level). Also expressed follicles of ovary, as well as in gonocytes of testis, spermatogonia, semen, oocytes and placenta (at protein level). Expressed in various cancers, including testis and lung cancers (at protein level), as well as kidney, prostate and trachea cancers.

It is found in the nucleus. It localises to the cytoplasm. Its subcellular location is the perinuclear region. The protein resides in the P-body. The protein localises to the stress granule. It is found in the cell projection. It localises to the lamellipodium. Its subcellular location is the dendrite. The protein resides in the dendritic spine. The protein localises to the growth cone. It is found in the filopodium. It localises to the axon. Its function is as follows. RNA-binding factor that recruits target transcripts to cytoplasmic protein-RNA complexes (mRNPs). This transcript 'caging' into mRNPs allows mRNA transport and transient storage. It also modulates the rate and location at which target transcripts encounter the translational apparatus and shields them from endonuclease attacks or microRNA-mediated degradation. Preferentially binds to N6-methyladenosine (m6A)-containing mRNAs and increases their stability. Plays a direct role in the transport and translation of transcripts required for axonal regeneration in adult sensory neurons. Regulates localized beta-actin/ACTB mRNA translation, a crucial process for cell polarity, cell migration and neurite outgrowth. Co-transcriptionally associates with the ACTB mRNA in the nucleus. This binding involves a conserved 54-nucleotide element in the ACTB mRNA 3'-UTR, known as the 'zipcode'. The RNP thus formed is exported to the cytoplasm, binds to a motor protein and is transported along the cytoskeleton to the cell periphery. During transport, prevents ACTB mRNA from being translated into protein. When the RNP complex reaches its destination near the plasma membrane, IGF2BP1 is phosphorylated. This releases the mRNA, allowing ribosomal 40S and 60S subunits to assemble and initiate ACTB protein synthesis. Monomeric ACTB then assembles into the subcortical actin cytoskeleton. During neuronal development, key regulator of neurite outgrowth, growth cone guidance and neuronal cell migration, presumably through the spatiotemporal fine tuning of protein synthesis, such as that of ACTB. May regulate mRNA transport to activated synapses. Binds to and stabilizes ABCB1/MDR-1 mRNA. During interstinal wound repair, interacts with and stabilizes PTGS2 transcript. PTGS2 mRNA stabilization may be crucial for colonic mucosal wound healing. Binds to the 3'-UTR of IGF2 mRNA by a mechanism of cooperative and sequential dimerization and regulates IGF2 mRNA subcellular localization and translation. Binds to MYC mRNA, in the coding region instability determinant (CRD) of the open reading frame (ORF), hence preventing MYC cleavage by endonucleases and possibly microRNA targeting to MYC-CRD. Binding to MYC mRNA is enhanced by m6A-modification of the CRD. Binds to the 3'-UTR of CD44 mRNA and stabilizes it, hence promotes cell adhesion and invadopodia formation in cancer cells. Binds to the oncofetal H19 transcript and to the neuron-specific TAU mRNA and regulates their localizations. Binds to and stabilizes BTRC/FBW1A mRNA. Binds to the adenine-rich autoregulatory sequence (ARS) located in PABPC1 mRNA and represses its translation. PABPC1 mRNA-binding is stimulated by PABPC1 protein. Prevents BTRC/FBW1A mRNA degradation by disrupting microRNA-dependent interaction with AGO2. Promotes the directed movement of tumor-derived cells by fine-tuning intracellular signaling networks. Binds to MAPK4 3'-UTR and inhibits its translation. Interacts with PTEN transcript open reading frame (ORF) and prevents mRNA decay. This combined action on MAPK4 (down-regulation) and PTEN (up-regulation) antagonizes HSPB1 phosphorylation, consequently it prevents G-actin sequestration by phosphorylated HSPB1, allowing F-actin polymerization. Hence enhances the velocity of cell migration and stimulates directed cell migration by PTEN-modulated polarization. Interacts with Hepatitis C virus (HCV) 5'-UTR and 3'-UTR and specifically enhances translation at the HCV IRES, but not 5'-cap-dependent translation, possibly by recruiting eIF3. Interacts with HIV-1 GAG protein and blocks the formation of infectious HIV-1 particles. Reduces HIV-1 assembly by inhibiting viral RNA packaging, as well as assembly and processing of GAG protein on cellular membranes. During cellular stress, such as oxidative stress or heat shock, stabilizes target mRNAs that are recruited to stress granules, including CD44, IGF2, MAPK4, MYC, PTEN, RAPGEF2 and RPS6KA5 transcripts. The chain is Insulin-like growth factor 2 mRNA-binding protein 1 (IGF2BP1) from Homo sapiens (Human).